A 549-amino-acid chain; its full sequence is Glucose-6-phosphate isomerase (549 aa).

The Proton donor role is filled by E353. Catalysis depends on residues H384 and K513.

This sequence belongs to the GPI family.

The protein localises to the cytoplasm. The catalysed reaction is alpha-D-glucose 6-phosphate = beta-D-fructose 6-phosphate. Its pathway is carbohydrate biosynthesis; gluconeogenesis. It participates in carbohydrate degradation; glycolysis; D-glyceraldehyde 3-phosphate and glycerone phosphate from D-glucose: step 2/4. Functionally, catalyzes the reversible isomerization of glucose-6-phosphate to fructose-6-phosphate. This Brucella suis (strain ATCC 23445 / NCTC 10510) protein is Glucose-6-phosphate isomerase.